The following is a 503-amino-acid chain: Asparagine--tRNA ligase (503 aa).

The protein belongs to the class-II aminoacyl-tRNA synthetase family. As to quaternary structure, homodimer.

It is found in the cytoplasm. It catalyses the reaction tRNA(Asn) + L-asparagine + ATP = L-asparaginyl-tRNA(Asn) + AMP + diphosphate + H(+). In Aster yellows witches'-broom phytoplasma (strain AYWB), this protein is Asparagine--tRNA ligase.